Here is a 419-residue protein sequence, read N- to C-terminus: D(4) dopamine receptor (419 aa).

Residues M1–G29 are Extracellular-facing. The N-linked (GlcNAc...) asparagine glycan is linked to N3. A helical membrane pass occupies residues L30–A50. The Cytoplasmic portion of the chain corresponds to G51 to S71. Residues F72 to V92 traverse the membrane as a helical segment. D80 lines the Na(+) pocket. Over Y93–A110 the chain is Extracellular. Cysteines 108 and 185 form a disulfide. A helical membrane pass occupies residues L111 to V131. Residue D115 participates in (2R,3R)-nemonapride binding. A Na(+)-binding site is contributed by S122. The Cytoplasmic portion of the chain corresponds to D132–Q152. A helical membrane pass occupies residues L153–G173. Residues L174 to Y192 are Extracellular-facing. A helical membrane pass occupies residues V193–W213. S196 is a binding site for (2R,3R)-nemonapride. The Cytoplasmic portion of the chain corresponds to A214–R346. The interval L230–P264 is disordered. Residues P238 to P254 show a composition bias toward pro residues. The 1; approximate repeat unit spans residues P249–P264. The 4 X 16 AA approximate tandem repeats of [PA]-A-P-G-L-P-[PQR]-[DG]-P-C-G-P-D-C-A-P stretch occupies residues P249–P312. 2 repeat units span residues P265–P280 and A281–P296. Residues P297–P312 form a 4; approximate repeat. A disordered region spans residues R317 to K336. A helical transmembrane segment spans residues V347–I367. Over T368 to V382 the chain is Extracellular. C372 and C375 are oxidised to a cystine. Residues S383 to F403 traverse the membrane as a helical segment. At N404–C419 the chain is on the cytoplasmic side. A lipid anchor (S-palmitoyl cysteine) is attached at C419.

The protein belongs to the G-protein coupled receptor 1 family. In terms of assembly, forms homo- and heterooligomers with DRD2. D4.7 allele exhibits higher affinity for homodimers compared to DRD2 heterodimers, while alleles D42. and 4.4 have similar affinities for both. The interaction with DRD2 may modulate agonist-induced downstream signaling. Interacts with CLIC6. Interacts with GPRASP1. May interact with ADORA2A. Interacts with KLHL12. Post-translationally, polyubiquitinated by the BCR(KLHL12) E3 ubiquitin ligase complex: polyubiquitination does not lead to degradation of DRD4 protein. In terms of processing, palmitoylated. Palmitoylation of the C-terminal Cys is important for normal expression at the cell membrane. Highly expressed in retina. Detected at much lower levels in brain, in amygdala, thalamus, hypothalamus, cerebellum and pituitary.

The protein resides in the cell membrane. With respect to regulation, signaling in response to agonists such as dopamine, epinephrine and norepinephrine is modulated by Na(+); lower Na(+) levels result in higher receptor activity (in vitro). In terms of biological role, dopamine receptor responsible for neuronal signaling in the mesolimbic system of the brain, an area of the brain that regulates emotion and complex behavior. Activated by dopamine, but also by epinephrine and norepinephrine, and by numerous synthetic agonists and drugs. Agonist binding triggers signaling via G proteins that inhibit adenylyl cyclase. Modulates the circadian rhythm of contrast sensitivity by regulating the rhythmic expression of NPAS2 in the retinal ganglion cells. This Homo sapiens (Human) protein is D(4) dopamine receptor (DRD4).